Here is a 139-residue protein sequence, read N- to C-terminus: Dehydrin DHN1 (139 aa).

Residues 1 to 139 (MEYQGQHGHA…IKEKLPGGQH (139 aa)) form a disordered region. A compositionally biased stretch (gly residues) spans 23–42 (GHGGFTGGPTGTHGAAGVGG). The span at 49–58 (RDGHKTDGVL) shows a compositional bias: basic and acidic residues. Residues 59–68 (RRSGSSSSSS) show a composition bias toward low complexity. Residues 83 to 98 (KEKIKEKLPGGAHKDA) are compositionally biased toward basic and acidic residues. The segment covering 99–109 (AGQQQQTAMAG) has biased composition (low complexity). The segment covering 120–139 (TGEKKGVMDKIKEKLPGGQH) has biased composition (basic and acidic residues).

Belongs to the plant dehydrin family.

The chain is Dehydrin DHN1 (DHN1) from Hordeum vulgare (Barley).